The chain runs to 59 residues: UPF0337 protein PP_4561 (59 aa).

The span at 27–43 (TDNEKLRAEGKAQELKG) shows a compositional bias: basic and acidic residues. Positions 27 to 59 (TDNEKLRAEGKAQELKGEAQQVKGNVKDAVKKP) are disordered.

This sequence belongs to the UPF0337 (CsbD) family.

The polypeptide is UPF0337 protein PP_4561 (Pseudomonas putida (strain ATCC 47054 / DSM 6125 / CFBP 8728 / NCIMB 11950 / KT2440)).